We begin with the raw amino-acid sequence, 277 residues long: Large ribosomal subunit protein uL2 (277 aa).

Basic residues-rich tracts occupy residues 210–219 and 259–277; these read RARWAGKRPQ and TRSK…RNKK. The disordered stretch occupies residues 210–277; it reads RARWAGKRPQ…KFIVRSRNKK (68 aa).

It belongs to the universal ribosomal protein uL2 family. As to quaternary structure, part of the 50S ribosomal subunit. Forms a bridge to the 30S subunit in the 70S ribosome.

Functionally, one of the primary rRNA binding proteins. Required for association of the 30S and 50S subunits to form the 70S ribosome, for tRNA binding and peptide bond formation. It has been suggested to have peptidyltransferase activity; this is somewhat controversial. Makes several contacts with the 16S rRNA in the 70S ribosome. In Ligilactobacillus salivarius (strain UCC118) (Lactobacillus salivarius), this protein is Large ribosomal subunit protein uL2.